Here is a 220-residue protein sequence, read N- to C-terminus: Deoxyribose-phosphate aldolase 1 (220 aa).

D89 acts as the Proton donor/acceptor in catalysis. Catalysis depends on K151, which acts as the Schiff-base intermediate with acetaldehyde. K180 (proton donor/acceptor) is an active-site residue.

The protein belongs to the DeoC/FbaB aldolase family. DeoC type 1 subfamily.

The protein resides in the cytoplasm. The enzyme catalyses 2-deoxy-D-ribose 5-phosphate = D-glyceraldehyde 3-phosphate + acetaldehyde. It participates in carbohydrate degradation; 2-deoxy-D-ribose 1-phosphate degradation; D-glyceraldehyde 3-phosphate and acetaldehyde from 2-deoxy-alpha-D-ribose 1-phosphate: step 2/2. In terms of biological role, catalyzes a reversible aldol reaction between acetaldehyde and D-glyceraldehyde 3-phosphate to generate 2-deoxy-D-ribose 5-phosphate. In Staphylococcus aureus (strain MSSA476), this protein is Deoxyribose-phosphate aldolase 1.